The primary structure comprises 274 residues: Proteasome subunit beta (274 aa).

The propeptide at 1-52 is removed in mature form; by autocatalysis; the sequence is MPDPTGVAGRLPAVFMTPGTSSFTDFLSVAAPDLLPGARGPLPAPVTDAAHG. The Nucleophile role is filled by Thr53.

The protein belongs to the peptidase T1B family. In terms of assembly, the 20S proteasome core is composed of 14 alpha and 14 beta subunits that assemble into four stacked heptameric rings, resulting in a barrel-shaped structure. The two inner rings, each composed of seven catalytic beta subunits, are sandwiched by two outer rings, each composed of seven alpha subunits. The catalytic chamber with the active sites is on the inside of the barrel. Has a gated structure, the ends of the cylinder being occluded by the N-termini of the alpha-subunits. Is capped by the proteasome-associated ATPase, ARC.

The protein resides in the cytoplasm. It carries out the reaction Cleavage of peptide bonds with very broad specificity.. It functions in the pathway protein degradation; proteasomal Pup-dependent pathway. Its activity is regulated as follows. The formation of the proteasomal ATPase ARC-20S proteasome complex, likely via the docking of the C-termini of ARC into the intersubunit pockets in the alpha-rings, may trigger opening of the gate for substrate entry. Interconversion between the open-gate and close-gate conformations leads to a dynamic regulation of the 20S proteasome proteolysis activity. Its function is as follows. Component of the proteasome core, a large protease complex with broad specificity involved in protein degradation. This is Proteasome subunit beta from Parafrankia sp. (strain EAN1pec).